The primary structure comprises 257 residues: uncharacterized protein (257 aa).

Disordered regions lie at residues 1 to 164 (MERS…AGAC) and 225 to 257 (TAWSGACGAGPTAATAAQPGKPRSAAAPGRARA). The span at 10–28 (CGEEPRSGSRRLPKAEGDK) shows a compositional bias: basic and acidic residues. Residues 54-65 (RPNRASGRRRRS) show a composition bias toward basic residues. Over residues 125 to 139 (RPTPRPCAGPAPPPA) the composition is skewed to pro residues. A compositionally biased stretch (basic residues) spans 144–162 (RCRRPRRWPRAGRRGRRAG).

This is an uncharacterized protein from Homo sapiens (Human).